We begin with the raw amino-acid sequence, 285 residues long: MKFAIVVNINREDALELAQELTSWLQERGLSYVLDSVSGEKTGIEPSMAMEELNKDCDAFISLGGDGTLLFTSHYSVTKPVIGINVGHLGFLAEFSKAEMFEAVEQVLNGTYSIHVRSQLEAEVTMNGGLKHLTALNDVVIEKGAYPRIPTFIIKLDDELLSAYRADGIIIATSTGSTAYSLSAGGPIIAPKSNVFVITPICPHMLTVRPIVISDDKTIQISVEAHGGEFPLNCDGHVSKMLLPGETIIVRKSEQIINLVENKNRRYCEILRSKLLWGHEHQSGS.

Asp66 acts as the Proton acceptor in catalysis. NAD(+) contacts are provided by residues 66 to 67 (DG), 137 to 138 (ND), Arg148, Arg165, Asp167, and 178 to 183 (TAYSLS).

It belongs to the NAD kinase family. The cofactor is a divalent metal cation.

The protein localises to the cytoplasm. It carries out the reaction NAD(+) + ATP = ADP + NADP(+) + H(+). Functionally, involved in the regulation of the intracellular balance of NAD and NADP, and is a key enzyme in the biosynthesis of NADP. Catalyzes specifically the phosphorylation on 2'-hydroxyl of the adenosine moiety of NAD to yield NADP. This Prosthecochloris aestuarii (strain DSM 271 / SK 413) protein is NAD kinase.